Here is a 200-residue protein sequence, read N- to C-terminus: Peptidyl-tRNA hydrolase (200 aa).

A tRNA-binding site is contributed by tyrosine 15. Catalysis depends on histidine 20, which acts as the Proton acceptor. The tRNA site is built by tyrosine 66, asparagine 68, and asparagine 114.

Belongs to the PTH family. As to quaternary structure, monomer.

The protein localises to the cytoplasm. It carries out the reaction an N-acyl-L-alpha-aminoacyl-tRNA + H2O = an N-acyl-L-amino acid + a tRNA + H(+). Hydrolyzes ribosome-free peptidyl-tRNAs (with 1 or more amino acids incorporated), which drop off the ribosome during protein synthesis, or as a result of ribosome stalling. In terms of biological role, catalyzes the release of premature peptidyl moieties from peptidyl-tRNA molecules trapped in stalled 50S ribosomal subunits, and thus maintains levels of free tRNAs and 50S ribosomes. This chain is Peptidyl-tRNA hydrolase, found in Paraburkholderia xenovorans (strain LB400).